The following is a 216-amino-acid chain: Uracil phosphoribosyltransferase (216 aa).

5-phospho-alpha-D-ribose 1-diphosphate is bound by residues Arg-85, Arg-110, and 136-144 (DPMLATGNS). Residues Ile-201 and 206–208 (GDA) each bind uracil. Asp-207 contributes to the 5-phospho-alpha-D-ribose 1-diphosphate binding site.

The protein belongs to the UPRTase family. Mg(2+) serves as cofactor.

It carries out the reaction UMP + diphosphate = 5-phospho-alpha-D-ribose 1-diphosphate + uracil. The protein operates within pyrimidine metabolism; UMP biosynthesis via salvage pathway; UMP from uracil: step 1/1. With respect to regulation, allosterically activated by GTP. Catalyzes the conversion of uracil and 5-phospho-alpha-D-ribose 1-diphosphate (PRPP) to UMP and diphosphate. The chain is Uracil phosphoribosyltransferase from Rhodospirillum centenum (strain ATCC 51521 / SW).